The primary structure comprises 210 residues: Chorismate pyruvate-lyase (210 aa).

The protein belongs to the chorismate pyruvate-lyase type 2 family.

The catalysed reaction is chorismate = 4-hydroxybenzoate + pyruvate. Functionally, removes the pyruvyl group from chorismate to provide 4-hydroxybenzoate (4HB). Involved in the synthesis of glycosylated p-hydroxybenzoic acid methyl esters (p-HBADs) and phenolic glycolipids (PGL) that play important roles in the pathogenesis of mycobacterial infections. The polypeptide is Chorismate pyruvate-lyase (Mycobacterium leprae (strain TN)).